The chain runs to 295 residues: Acetylglutamate kinase (295 aa).

Substrate-binding positions include 66-67 (GG), Arg88, and Asn193.

It belongs to the acetylglutamate kinase family. ArgB subfamily.

The protein localises to the cytoplasm. It carries out the reaction N-acetyl-L-glutamate + ATP = N-acetyl-L-glutamyl 5-phosphate + ADP. Its pathway is amino-acid biosynthesis; L-arginine biosynthesis; N(2)-acetyl-L-ornithine from L-glutamate: step 2/4. In terms of biological role, catalyzes the ATP-dependent phosphorylation of N-acetyl-L-glutamate. The sequence is that of Acetylglutamate kinase from Allorhizobium ampelinum (strain ATCC BAA-846 / DSM 112012 / S4) (Agrobacterium vitis (strain S4)).